The sequence spans 157 residues: MPKGEGKVVSQNKKANHDYFIEETYETGIVLQGTEIKSIRAGRVNLKDAFAKIERGEVFLHNMHISPYEQGNRYNHDPLRTRKLLMHRKQINKLIGLTKEQGYSLVPLKIYLKNGFAKVLLGLGKGKKKFDKREDLKRKDAKREIERAFRDRQKGLI.

The protein belongs to the SmpB family.

It is found in the cytoplasm. In terms of biological role, required for rescue of stalled ribosomes mediated by trans-translation. Binds to transfer-messenger RNA (tmRNA), required for stable association of tmRNA with ribosomes. tmRNA and SmpB together mimic tRNA shape, replacing the anticodon stem-loop with SmpB. tmRNA is encoded by the ssrA gene; the 2 termini fold to resemble tRNA(Ala) and it encodes a 'tag peptide', a short internal open reading frame. During trans-translation Ala-aminoacylated tmRNA acts like a tRNA, entering the A-site of stalled ribosomes, displacing the stalled mRNA. The ribosome then switches to translate the ORF on the tmRNA; the nascent peptide is terminated with the 'tag peptide' encoded by the tmRNA and targeted for degradation. The ribosome is freed to recommence translation, which seems to be the essential function of trans-translation. The protein is SsrA-binding protein of Bacillus licheniformis (strain ATCC 14580 / DSM 13 / JCM 2505 / CCUG 7422 / NBRC 12200 / NCIMB 9375 / NCTC 10341 / NRRL NRS-1264 / Gibson 46).